Here is a 794-residue protein sequence, read N- to C-terminus: Zinc finger protein 148 (794 aa).

Residue K6 forms a Glycyl lysine isopeptide (Lys-Gly) (interchain with G-Cter in SUMO2) linkage. A Phosphoserine modification is found at S51. Residues K88, K115, and K132 each participate in a glycyl lysine isopeptide (Lys-Gly) (interchain with G-Cter in SUMO2) cross-link. The C2H2-type 1 zinc finger occupies 171–193 (HVCEHCNAAFRTNYHLQRHVFIH). Position 194 is a phosphothreonine (T194). 2 consecutive C2H2-type zinc fingers follow at residues 199 to 221 (FQCS…EKIH) and 227 to 249 (FRCD…KRTH). Phosphoserine is present on S250. Residues 255-278 (YQCEYCLQYFSRTDRVLKHKRMCH) form a C2H2-type 4 zinc finger. K291 participates in a covalent cross-link: Glycyl lysine isopeptide (Lys-Gly) (interchain with G-Cter in SUMO2). The disordered stretch occupies residues 298-336 (EEDSGFSTSPKDNSLPKKKRQKTEKKSSGMDKESALDKS). S301 and S306 each carry phosphoserine. K308 participates in a covalent cross-link: Glycyl lysine isopeptide (Lys-Gly) (interchain with G-Cter in SUMO2). Residues 321 to 336 (EKKSSGMDKESALDKS) show a composition bias toward basic and acidic residues. K356 participates in a covalent cross-link: Glycyl lysine isopeptide (Lys-Gly) (interchain with G-Cter in SUMO1); alternate. A Glycyl lysine isopeptide (Lys-Gly) (interchain with G-Cter in SUMO2); alternate cross-link involves residue K356. A Glycyl lysine isopeptide (Lys-Gly) (interchain with G-Cter in SUMO2) cross-link involves residue K402. The residue at position 412 (S412) is a Phosphoserine. Residues K421 and K424 each participate in a glycyl lysine isopeptide (Lys-Gly) (interchain with G-Cter in SUMO2) cross-link. Polar residues predominate over residues 574–588 (NSSEVPEVTPSENVG). Residues 574–599 (NSSEVPEVTPSENVGSSSQASSSDKA) form a disordered region. K607 is subject to N6-acetyllysine. Phosphoserine is present on residues S665 and S784.

This sequence belongs to the krueppel C2H2-type zinc-finger protein family. In terms of assembly, interacts with HNRNPDL. Interacts with the 5FMC complex; the interaction requires association with CHTOP. Interacts with CAVIN1. In terms of processing, sumoylated with SUMO2. Desumoylated by SENP3, resulting in the stimulation of transcription of its target genes.

Its subcellular location is the nucleus. Functionally, involved in transcriptional regulation. Represses the transcription of a number of genes including gastrin, stromelysin and enolase. Binds to the G-rich box in the enhancer region of these genes. The chain is Zinc finger protein 148 (ZNF148) from Pongo abelii (Sumatran orangutan).